Reading from the N-terminus, the 346-residue chain is MENEEIPEFLSPKEEIVYWRELAKRLKQSYQEARDELIEFQEGSRELEAELETQLVQAEQRNRDLLSDNQRLKCEVESLKEKLEHQYAQSYKQVSLLEDELARARSIKDQLHKYVRELEQANDDLERAKRATIVSLEDFEQRLNQAIERNAFLESELDEKESLLVSVQRLKDEARDLRQELAVRERQTNGTRKSAPSSPTLDCDKTDSAVQASLSLPATPVGKVCDNSFTPPKGIPNGFGTTPLTPSARISALNIVGDLLRKVGALESKLAACRNFAKDQASRKSYTPVGLNSSGGGSSALNSSGVKYSHAGHTSFFDKGAVNGYDPPGVLGSRPPSPPGMLPLSV.

Positions 13-190 (KEEIVYWREL…LAVRERQTNG (178 aa)) form a coiled coil. 2 disordered regions span residues 184–205 (RERQ…DCDK) and 325–346 (YDPP…PLSV). The segment covering 188–200 (TNGTRKSAPSSPT) has biased composition (polar residues). Residues 335–346 (PPSPPGMLPLSV) are compositionally biased toward pro residues.

Belongs to the nudE family. In terms of processing, phosphorylated in mitosis.

The protein localises to the cytoplasm. The protein resides in the cytoskeleton. It localises to the microtubule organizing center. Its subcellular location is the centrosome. It is found in the spindle. Required for organization of the cellular microtubule array and microtubule anchoring at the centrosome. Positively regulates the activity of the minus-end directed microtubule motor protein dynein. May enhance dynein-mediated microtubule sliding by targeting dynein to the microtubule plus end. Positively regulates lysosome peripheral distribution and ruffled border formation in osteoclasts. The sequence is that of Nuclear distribution protein nudE-like 1 (ndel1) from Xenopus tropicalis (Western clawed frog).